Reading from the N-terminus, the 402-residue chain is Sulfate adenylyltransferase (402 aa).

It belongs to the sulfate adenylyltransferase family.

The enzyme catalyses sulfate + ATP + H(+) = adenosine 5'-phosphosulfate + diphosphate. It functions in the pathway sulfur metabolism; hydrogen sulfide biosynthesis; sulfite from sulfate: step 1/3. In Vesicomyosocius okutanii subsp. Calyptogena okutanii (strain HA), this protein is Sulfate adenylyltransferase.